The chain runs to 375 residues: Chaperone protein DnaJ (375 aa).

Residues 6–71 form the J domain; the sequence is DYYEILGVSR…DKRARYDQYG (66 aa). The CR-type zinc-finger motif lies at 132–214; that stretch reads GTTKKITIPR…CQGSGKVRKQ (83 aa). Residues cysteine 145, cysteine 148, cysteine 162, cysteine 165, cysteine 188, cysteine 191, cysteine 202, and cysteine 205 each coordinate Zn(2+). CXXCXGXG motif repeat units lie at residues 145-152, 162-169, 188-195, and 202-209; these read CDTCNGTG, CPQCNGSG, CDRCGGRG, and CPTCQGSG. The segment at 222-243 is disordered; sequence PPGVDTGTRLRMPNEGEAGDKG.

The protein belongs to the DnaJ family. Homodimer. The cofactor is Zn(2+).

The protein resides in the cytoplasm. Its function is as follows. Participates actively in the response to hyperosmotic and heat shock by preventing the aggregation of stress-denatured proteins and by disaggregating proteins, also in an autonomous, DnaK-independent fashion. Unfolded proteins bind initially to DnaJ; upon interaction with the DnaJ-bound protein, DnaK hydrolyzes its bound ATP, resulting in the formation of a stable complex. GrpE releases ADP from DnaK; ATP binding to DnaK triggers the release of the substrate protein, thus completing the reaction cycle. Several rounds of ATP-dependent interactions between DnaJ, DnaK and GrpE are required for fully efficient folding. Also involved, together with DnaK and GrpE, in the DNA replication of plasmids through activation of initiation proteins. The protein is Chaperone protein DnaJ of Halothermothrix orenii (strain H 168 / OCM 544 / DSM 9562).